The sequence spans 472 residues: Membrane-bound acylglycerophosphatidylinositol O-acyltransferase MBOAT7 (472 aa).

The Cytoplasmic portion of the chain corresponds to 1–5 (MSPEE). A helical transmembrane segment spans residues 6–22 (WTYLVVLLISIPIGFLF). Topologically, residues 23–33 (KKAGPGLKRWG) are lumenal. The helical transmembrane segment at 34–57 (AAAVGLGLTLFTCGPHTLHSLVTI) threads the bilayer. At 58-73 (LGTWALIQAQPCSCHA) the chain is on the cytoplasmic side. The helical transmembrane segment at 74–93 (LALAWTFSYLLFFRALSLLG) threads the bilayer. The Lumenal segment spans residues 94-194 (LPTPTPFTNA…VPSLRPLLRR (101 aa)). A helical membrane pass occupies residues 195-212 (AWPAPLFGLLFLLSSHLF). Residues 213–231 (PLEAVREDAFYARPLPARL) are Cytoplasmic-facing. A helical membrane pass occupies residues 232–261 (FYMIPVFFAFRMRFYVAWIAAECGCIAAGF). Topologically, residues 262–426 (GAYPVAAKAR…LSLADTLRYW (165 aa)) are lumenal. N321 carries an N-linked (GlcNAc...) asparagine glycan. A helical transmembrane segment spans residues 427-447 (ASIYFCIHFLALAALGLGLAL). The Cytoplasmic segment spans residues 448 to 472 (GGGSPSRRKAASQPTSLAPEKLREE). A disordered region spans residues 453 to 472 (SRRKAASQPTSLAPEKLREE).

Belongs to the membrane-bound acyltransferase family. In terms of assembly, interacts with SPTSSA; the interaction facilitates MBOAT7 location to mitochondria-associated membranes (MAMs). As to expression, overexpressed in metastatic breast and bladder carcinomas relative to normal breast epithelium and urothelium.

The protein localises to the endoplasmic reticulum membrane. The enzyme catalyses a 1-acyl-sn-glycero-3-phospho-(1D-myo-inositol) + (5Z,8Z,11Z,14Z)-eicosatetraenoyl-CoA = a 1-acyl-2-(5Z,8Z,11Z,14Z-eicosatetraenoyl)-sn-glycero-3-phospho-(1D-myo-inositol) + CoA. It carries out the reaction (5Z,8Z,11Z,14Z)-eicosatetraenoyl-CoA + 1-hexadecanoyl-sn-glycero-3-phosphocholine = 1-hexadecanoyl-2-(5Z,8Z,11Z,14Z-eicosatetraenoyl)-sn-glycero-3-phosphocholine + CoA. The catalysed reaction is a 1-acyl-sn-glycero-3-phospho-(1D-myo-inositol) + an acyl-CoA = a 1,2-diacyl-sn-glycero-3-phospho-(1D-myo-inositol) + CoA. It catalyses the reaction 1-octadecanoyl-sn-glycero-3-phospho-(1D-myo-inositol) + (5Z,8Z,11Z,14Z)-eicosatetraenoyl-CoA = 1-octadecanoyl-2-(5Z,8Z,11Z,14Z-eicosatetraenoyl)-sn-glycero-3-phospho-(1D-myo-inositol) + CoA. Its pathway is lipid metabolism; phospholipid metabolism. With respect to regulation, activity is inhibited by thimerosal. Functionally, acyltransferase which catalyzes the transfer of an acyl group from an acyl-CoA to a lysophosphatidylinositol (1-acylglycerophosphatidylinositol or LPI) leading to the production of a phosphatidylinositol (1,2-diacyl-sn-glycero-3-phosphoinositol or PI) and participates in the reacylation step of the phospholipid remodeling pathway also known as the Lands cycle. Prefers arachidonoyl-CoA as the acyl donor, thus contributing to the regulation of free levels arachidonic acid in cell. In liver, participates in the regulation of triglyceride metabolism through the phosphatidylinositol acyl-chain remodeling regulation. The polypeptide is Membrane-bound acylglycerophosphatidylinositol O-acyltransferase MBOAT7 (Homo sapiens (Human)).